We begin with the raw amino-acid sequence, 225 residues long: Uracil-DNA glycosylase (225 aa).

The active-site Proton acceptor is aspartate 68.

The protein belongs to the uracil-DNA glycosylase (UDG) superfamily. UNG family.

The protein resides in the cytoplasm. It catalyses the reaction Hydrolyzes single-stranded DNA or mismatched double-stranded DNA and polynucleotides, releasing free uracil.. Functionally, excises uracil residues from the DNA which can arise as a result of misincorporation of dUMP residues by DNA polymerase or due to deamination of cytosine. This Mycolicibacterium vanbaalenii (strain DSM 7251 / JCM 13017 / BCRC 16820 / KCTC 9966 / NRRL B-24157 / PYR-1) (Mycobacterium vanbaalenii) protein is Uracil-DNA glycosylase.